Consider the following 1496-residue polypeptide: Chromosome partition protein MukB (1496 aa).

63–70 (GGNGAGKS) is a binding site for ATP. 2 coiled-coil regions span residues 328-493 (KLEL…QRLS) and 536-632 (KMQA…APAW). The interval 694–811 (PDGSDDVRLN…EVPLFGRAAR (118 aa)) is flexible hinge. 2 coiled-coil regions span residues 861–1171 (NPEE…SAEE) and 1235–1291 (IDAI…LQNI). Basic and acidic residues predominate over residues 1082–1091 (RARSRRDELQ). Residues 1082–1101 (RARSRRDELQQRLSQQRSRK) form a disordered region.

Belongs to the SMC family. MukB subfamily. In terms of assembly, homodimerization via its hinge domain. Binds to DNA via its C-terminal region. Interacts, and probably forms a ternary complex, with MukE and MukF via its C-terminal region. The complex formation is stimulated by calcium or magnesium. Interacts with tubulin-related protein FtsZ.

It localises to the cytoplasm. The protein localises to the nucleoid. Its function is as follows. Plays a central role in chromosome condensation, segregation and cell cycle progression. Functions as a homodimer, which is essential for chromosome partition. Involved in negative DNA supercoiling in vivo, and by this means organize and compact chromosomes. May achieve or facilitate chromosome segregation by condensation DNA from both sides of a centrally located replisome during cell division. The polypeptide is Chromosome partition protein MukB (Actinobacillus pleuropneumoniae serotype 3 (strain JL03)).